We begin with the raw amino-acid sequence, 678 residues long: Portal protein (678 aa).

The tract at residues 376–405 (PAVDHTLPGFGKGGTGRGSRPQDPGARPQQ) is disordered. Residues 422 to 443 (LEGYINNLFGTIERLRETNAGL) form a putative leucine zipper motif region. A compositionally biased stretch (basic and acidic residues) spans 459-470 (AGALEREQRAAD). Disordered regions lie at residues 459–480 (AGALEREQRAADRAAGGGAGRP) and 622–678 (PRPP…HARR). The span at 642–652 (SRSRTRTRSRS) shows a compositional bias: basic residues. Positions 667 to 678 (VERRDGRPHARR) are enriched in basic and acidic residues.

It belongs to the herpesviridae portal protein family. As to quaternary structure, homododecamerizes. Interacts with terminase subunits TRM1 and TRM3.

It localises to the virion. The protein localises to the host nucleus. Its function is as follows. Forms a portal in the viral capsid through which viral DNA is translocated during DNA packaging. Assembles as a dodecamer at a single fivefold axe of the T=16 icosahedric capsid. Binds to the molecular motor that translocates the viral DNA, termed terminase. In Homo sapiens (Human), this protein is Portal protein (UL6).